Consider the following 127-residue polypeptide: Fluoride-specific ion channel FluC (127 aa).

The next 4 helical transmembrane spans lie at 3–23 (LVFL…YFVG), 38–58 (LGTF…GHLA), 67–87 (FGIF…SYGL), and 102–122 (ISYV…GWFL). Na(+) contacts are provided by Gly77 and Thr80.

This sequence belongs to the fluoride channel Fluc/FEX (TC 1.A.43) family.

Its subcellular location is the cell inner membrane. It carries out the reaction fluoride(in) = fluoride(out). Its activity is regulated as follows. Na(+) is not transported, but it plays an essential structural role and its presence is essential for fluoride channel function. Its function is as follows. Fluoride-specific ion channel. Important for reducing fluoride concentration in the cell, thus reducing its toxicity. This Helicobacter acinonychis (strain Sheeba) protein is Fluoride-specific ion channel FluC.